Consider the following 164-residue polypeptide: C-phycoerythrin alpha chain (164 aa).

The (2R,3E)-phycoerythrobilin site is built by Cys82 and Cys139.

Belongs to the phycobiliprotein family. Heterodimer of an alpha and a beta chain. Contains two covalently linked bilin chromophores.

It localises to the cellular thylakoid membrane. Functionally, light-harvesting photosynthetic bile pigment-protein from the phycobiliprotein complex. The protein is C-phycoerythrin alpha chain (cpeA) of Microchaete diplosiphon (Fremyella diplosiphon).